We begin with the raw amino-acid sequence, 889 residues long: Extended synaptotagmin-3 (889 aa).

The interval 1-65 (MAQGDPGGQT…GPRDPGQGGA (65 aa)) is disordered. The Cytoplasmic segment spans residues 1–66 (MAQGDPGGQT…PRDPGQGGAG (66 aa)). Basic and acidic residues-rich tracts occupy residues 17–28 (TDKKPDEPKATE) and 41–58 (PGGE…KGPR). The next 2 helical transmembrane spans lie at 67–91 (EALA…FPVY) and 92–112 (LCGR…LWMF). Residues 113–889 (WTRNKKFKLA…ELTPTGLPTS (777 aa)) lie on the Cytoplasmic side of the membrane. Residues 155–333 (DVERVEWLNK…LPNRFTVPLS (179 aa)) enclose the SMP-LTD domain. 2 consecutive C2 domains span residues 331 to 452 (PLSS…DEWF) and 468 to 618 (WLSL…STIK). Residues K363, D364, D376, D423, E424, D425, D427, D429, and D430 each contribute to the Ca(2+) site. A disordered region spans residues 649–724 (SIKRAQSQQH…GAVPESHTPS (76 aa)). The span at 658–671 (HKSHGKSHQAHHQA) shows a compositional bias: basic residues. Composition is skewed to low complexity over residues 672–682 (HQTQQNHTVQQ) and 691–714 (ISTT…PNST). Residues 757–879 (MTGEVEVSVR…DLVKGFTKWF (123 aa)) enclose the C2 3 domain. The tract at residues 804 to 811 (RKWSGRKK) is required for phosphatidylinositol 4,5-bisphosphate-dependent location at the cell membrane.

This sequence belongs to the extended synaptotagmin family.

It is found in the cell membrane. The protein resides in the endoplasmic reticulum membrane. In terms of biological role, tethers the endoplasmic reticulum to the cell membrane and promotes the formation of appositions between the endoplasmic reticulum and the cell membrane. Binds glycerophospholipids in a barrel-like domain and may play a role in cellular lipid transport. This chain is Extended synaptotagmin-3 (esyt3), found in Xenopus tropicalis (Western clawed frog).